A 507-amino-acid polypeptide reads, in one-letter code: Tabersonine/lochnericine 19-hydroxylase (507 aa).

Residues 8–28 (FFVLLLPFFIGIAFIYKLWNF) form a helical membrane-spanning segment. N167 carries N-linked (GlcNAc...) asparagine glycosylation. Heme is bound at residue C447.

The protein belongs to the cytochrome P450 family. The cofactor is heme. Confined to roots.

It localises to the endoplasmic reticulum membrane. It carries out the reaction (-)-tabersonine + reduced [NADPH--hemoprotein reductase] + O2 = (-)-(R)-19-hydroxytabersonine + oxidized [NADPH--hemoprotein reductase] + H2O + H(+). The enzyme catalyses lochnericine + reduced [NADPH--hemoprotein reductase] + O2 = horhammericine + oxidized [NADPH--hemoprotein reductase] + H2O + H(+). The catalysed reaction is (-)-vincadifformine + reduced [NADPH--hemoprotein reductase] + O2 = (-)-minovincinine + oxidized [NADPH--hemoprotein reductase] + H2O + H(+). It functions in the pathway alkaloid biosynthesis. Component of the monoterpenoid indole alkaloids (MIAs, e.g. echitovenine, tabersonine, lochnericine, 19-hydroxytabersonine and horhammericine) biosynthetic pathway; MIAs are used in cancer treatment and other medical applications. Cytochrome P450 catalyzing the conversion of (-)-tabersonine to 19-hydroxytabersonine, of lochnericine to horhammericine and of (-)-vincadifformine to (-)-minovincinine. This Catharanthus roseus (Madagascar periwinkle) protein is Tabersonine/lochnericine 19-hydroxylase.